The chain runs to 202 residues: Urease accessory protein UreG (202 aa).

11–18 (GPVGSGKT) provides a ligand contact to GTP.

The protein belongs to the SIMIBI class G3E GTPase family. UreG subfamily. As to quaternary structure, homodimer. UreD, UreF and UreG form a complex that acts as a GTP-hydrolysis-dependent molecular chaperone, activating the urease apoprotein by helping to assemble the nickel containing metallocenter of UreC. The UreE protein probably delivers the nickel.

It is found in the cytoplasm. Functionally, facilitates the functional incorporation of the urease nickel metallocenter. This process requires GTP hydrolysis, probably effectuated by UreG. This chain is Urease accessory protein UreG, found in Prochlorococcus marinus (strain MIT 9313).